The chain runs to 234 residues: Carboxy-S-adenosyl-L-methionine synthase (234 aa).

S-adenosyl-L-methionine contacts are provided by residues Y35, 60–62, 83–84, and R191; these read GCS and DN.

This sequence belongs to the class I-like SAM-binding methyltransferase superfamily. Cx-SAM synthase family. As to quaternary structure, homodimer.

It carries out the reaction prephenate + S-adenosyl-L-methionine = carboxy-S-adenosyl-L-methionine + 3-phenylpyruvate + H2O. In terms of biological role, catalyzes the conversion of S-adenosyl-L-methionine (SAM) to carboxy-S-adenosyl-L-methionine (Cx-SAM). This Campylobacter lari (strain RM2100 / D67 / ATCC BAA-1060) protein is Carboxy-S-adenosyl-L-methionine synthase.